We begin with the raw amino-acid sequence, 435 residues long: MKTTYVNATIVTMNEQNEVIENGYIIVENDQIIDVKSGEFASDFEVDEVIDMKGKWVLPGLVNTHTHVVMSLLRGIGDDMLLQPWLETRIWPLESQFTPQIAVASTELGLLEMVKSGTTSFSDMFNPIGVDQDAIMETVSRSGMRAAVSRTLFSFGTKEDEKKAIEEAERYVKRYYNESGMLTTMVAPHSPYTCSTELLEECARIAVENRTMVHIHLSETEREVRDIEAQYGKRPVEYAASCGLFKRPTVIAHGVVLNDSERAFLAEHDVRVAHNPNSNLKLGSGIANVKAMLEAGIKVGIATDSVASNNNLDMFEEMRIATLLQKGIHQDATALPVETALTLATKGAAEVIGMKQTGSLEVGKCADFITIDPSNKPHLQPADEVLSHLVYAASGKDISDVIINGKRVVWNGECKTLDEERIIFEASRYKRGLQR.

The Zn(2+) site is built by histidine 65 and histidine 67. The substrate site is built by glutamate 94, arginine 150, and histidine 189. Histidine 216 lines the Zn(2+) pocket. Substrate is bound by residues glutamate 219 and aspartate 304. Aspartate 304 is a Zn(2+) binding site.

The protein belongs to the metallo-dependent hydrolases superfamily. MTA/SAH deaminase family. Zn(2+) is required as a cofactor.

The catalysed reaction is S-adenosyl-L-homocysteine + H2O + H(+) = S-inosyl-L-homocysteine + NH4(+). It catalyses the reaction S-methyl-5'-thioadenosine + H2O + H(+) = S-methyl-5'-thioinosine + NH4(+). Functionally, catalyzes the deamination of 5-methylthioadenosine and S-adenosyl-L-homocysteine into 5-methylthioinosine and S-inosyl-L-homocysteine, respectively. Is also able to deaminate adenosine. In Bacillus cereus (strain ZK / E33L), this protein is 5-methylthioadenosine/S-adenosylhomocysteine deaminase.